Reading from the N-terminus, the 1093-residue chain is Isomaltosyltransferase (1093 aa).

Positions 1–29 are cleaved as a signal peptide; that stretch reads MYVRNLTGSFRFSLSFLLCFCLFVPSIYA. Aspartate 566 serves as the catalytic Nucleophile. Residue glutamate 569 is part of the active site. Aspartate 631 acts as the Proton donor in catalysis. The region spanning 968-1091 is the CBM6 domain; sequence VEYEAEFGVQ…GINFDNIAIV (124 aa).

This sequence belongs to the glycosyl hydrolase 31 family.

The protein localises to the secreted. It carries out the reaction 2 alpha-isomaltosyl-(1-&gt;4)-D-maltotriose = alpha-isomaltosyl-(1-&gt;3)-alpha-isomaltosyl-(1-&gt;4)-D-maltotriose + D-maltotriose. The catalysed reaction is alpha-isomaltosyl-(1-&gt;3)-alpha-isomaltosyl-(1-&gt;4)-D-maltotriose = cyclobis-(1-&gt;3)-alpha-D-isomaltosyl + D-maltotriose. Its activity is regulated as follows. Strongly inhibited by Hg(2+) and moderately inhibited by Cu(2+) and Pb(2+). Other metal ions, Tris and EDTA have almost no effects. Functionally, glycosyltransferase involved, together with CtsZ, in the conversion of alpha-1,4-glucan into a cyclic tetrasaccharide (CTS) constructed from four alpha-glucopyranosyl residues. Catalyzes the alpha-(1-&gt;3) transfer of the isomaltosyl moiety of alpha-isomaltosyl-(1-&gt;4)-D-maltotriose to another alpha-isomaltosyl-(1-&gt;4)-D-maltotriose, resulting in alpha-isomaltosyl-(1-&gt;3)-alpha-isomaltosyl-alpha-(1-&gt;4)-maltotriose formation. In addition, the enzyme catalyzes the intramolecular cyclization of the product, generating the cyclic tetrasaccharide cyclobis-(1-&gt;6)-alpha-nigerosyl. The sequence is that of Isomaltosyltransferase from Sporosarcina globispora (Bacillus globisporus).